Reading from the N-terminus, the 401-residue chain is Ninja-family protein MODD (401 aa).

2 disordered regions span residues 95–135 (KQGV…GEGR) and 215–238 (TGNKKTGGNVNHSSDRNRCTGLPP). Positions 105–130 (RPSGGAEAEPAAARLPASGSPSSGSS) are enriched in low complexity. Residues 217–226 (NKKTGGNVNH) show a composition bias toward polar residues.

The protein belongs to the Ninja family. As to quaternary structure, interacts with BZIP46, TPR3 and PUB70.

The protein localises to the nucleus. In terms of biological role, acts as a negative regulator of abscisic acid (ABA) signaling and drought tolerance. Mediates deactivation and degradation of BZIP46, a positive regulator of ABA signaling and drought stress tolerance. Represses BZIP46 activity via interaction with the TPR3-HDAC1 corepressor complex and down-regulation of the histone acetylation level at BZIP46 target genes. Promotes BZIP46 degradation via interaction with the U-box type ubiquitin E3 ligase PUB70. The sequence is that of Ninja-family protein MODD from Oryza sativa subsp. japonica (Rice).